The sequence spans 723 residues: Aspartate--tRNA(Asp/Asn) ligase 1 (723 aa).

E206 lines the L-aspartate pocket. An aspartate region spans residues 230–233 (QLFK). L-aspartate is bound at residue R252. ATP is bound by residues 252-254 (RDE) and Q261. An L-aspartate-binding site is contributed by H481. E516 contacts ATP. An L-aspartate-binding site is contributed by R523. An ATP-binding site is contributed by 568–571 (GMDR).

Belongs to the class-II aminoacyl-tRNA synthetase family. Type 1 subfamily. Homodimer.

Its subcellular location is the cytoplasm. The enzyme catalyses tRNA(Asx) + L-aspartate + ATP = L-aspartyl-tRNA(Asx) + AMP + diphosphate. Aspartyl-tRNA synthetase with relaxed tRNA specificity since it is able to aspartylate not only its cognate tRNA(Asp) but also tRNA(Asn). Reaction proceeds in two steps: L-aspartate is first activated by ATP to form Asp-AMP and then transferred to the acceptor end of tRNA(Asp/Asn). This chain is Aspartate--tRNA(Asp/Asn) ligase 1, found in Syntrophus aciditrophicus (strain SB).